The sequence spans 215 residues: Octanoyltransferase (215 aa).

In terms of domain architecture, BPL/LPL catalytic spans T31–E206. Substrate is bound by residues R70 to H77, S137 to G139, and G150 to A152. Residue C168 is the Acyl-thioester intermediate of the active site.

The protein belongs to the LipB family.

The protein localises to the cytoplasm. The catalysed reaction is octanoyl-[ACP] + L-lysyl-[protein] = N(6)-octanoyl-L-lysyl-[protein] + holo-[ACP] + H(+). Its pathway is protein modification; protein lipoylation via endogenous pathway; protein N(6)-(lipoyl)lysine from octanoyl-[acyl-carrier-protein]: step 1/2. Its function is as follows. Catalyzes the transfer of endogenously produced octanoic acid from octanoyl-acyl-carrier-protein onto the lipoyl domains of lipoate-dependent enzymes. Lipoyl-ACP can also act as a substrate although octanoyl-ACP is likely to be the physiological substrate. This Pseudomonas fluorescens (strain ATCC BAA-477 / NRRL B-23932 / Pf-5) protein is Octanoyltransferase.